A 343-amino-acid polypeptide reads, in one-letter code: MQTKVLCQRDIKRILSVVGRDVMMDRLISEVHAGFARLGRGETDEPPPRTGFARGGDVPGVIEFMPHRASGIGVTMKTVSYSPQNFERFNLPTIVGTVSRLDDDSGSMVALADAATITAMRTGAVAAVATRLLARPGSTTLALIGAGAQAVTQAHALSRVLPLERILISDIKAEHAESFAGRVAFLELPVEVTDAATAMATADVLCTVTSVPVGGGPVVPAEPRQAHLHVNGIGADEQGKTELPKALLDDAFICVDHPGQARAEGEFQQLPDRELGPSLADLCAAPEIAAPHPERLSVFDSTGSAFADHIALDVLLGFADELGLGHKMSIESTPEDVLDPYSL.

Belongs to the ornithine cyclodeaminase/mu-crystallin family. The cofactor is NAD(+).

It carries out the reaction L-lysine = L-pipecolate + NH4(+). Its pathway is antibiotic biosynthesis. With respect to regulation, inhibited by nipecotic acid and thiazolidine-2-carboxylic acid. Converts L-lysine to L-pipecolate, which is incorporated into multiple secondary metabolite products, including rapamycin, tobulysin, virginiamycin and pristinamycin. In Streptomyces rapamycinicus (strain ATCC 29253 / DSM 41530 / NRRL 5491 / AYB-994) (Streptomyces hygroscopicus (strain ATCC 29253)), this protein is L-lysine cyclodeaminase (rapL).